A 60-amino-acid polypeptide reads, in one-letter code: Toxin TdNa2 (60 aa).

In terms of domain architecture, LCN-type CS-alpha/beta spans 1–59 (RDAYPADWRGCKPSCPWGSSSWCNEECTSLGGSSGYCAWPACWCYGLPDSVRYYNNKCH). Disulfide bonds link Cys11-Cys58, Cys15-Cys37, Cys23-Cys42, and Cys27-Cys44.

It belongs to the long (4 C-C) scorpion toxin superfamily. Sodium channel inhibitor family. Beta subfamily. Expressed by the venom gland.

The protein localises to the secreted. In terms of biological role, inhibits the sodium currents (Nav) in an apparent irreversible manner. Produces small depolarization and induces repetitive firing in squid axons. Is specific for arthropods (crickets, triatomides, crabs and squids), but is non-toxic to mice. The sequence is that of Toxin TdNa2 from Tityus discrepans (Venezuelan scorpion).